Reading from the N-terminus, the 445-residue chain is Tubulin beta-5 chain (445 aa).

The GTP site is built by Q11, E69, S138, G142, T143, G144, N204, and N226. E69 is a binding site for Mg(2+). A disordered region spans residues 420–445 (AEYQQYQDATADDEYEEGEEEEEEAA). The span at 429 to 445 (TADDEYEEGEEEEEEAA) shows a compositional bias: acidic residues.

Belongs to the tubulin family. Dimer of alpha and beta chains. A typical microtubule is a hollow water-filled tube with an outer diameter of 25 nm and an inner diameter of 15 nM. Alpha-beta heterodimers associate head-to-tail to form protofilaments running lengthwise along the microtubule wall with the beta-tubulin subunit facing the microtubule plus end conferring a structural polarity. Microtubules usually have 13 protofilaments but different protofilament numbers can be found in some organisms and specialized cells. It depends on Mg(2+) as a cofactor.

It localises to the cytoplasm. Its subcellular location is the cytoskeleton. Functionally, tubulin is the major constituent of microtubules, a cylinder consisting of laterally associated linear protofilaments composed of alpha- and beta-tubulin heterodimers. Microtubules grow by the addition of GTP-tubulin dimers to the microtubule end, where a stabilizing cap forms. Below the cap, tubulin dimers are in GDP-bound state, owing to GTPase activity of alpha-tubulin. In Gossypium hirsutum (Upland cotton), this protein is Tubulin beta-5 chain.